A 489-amino-acid chain; its full sequence is Aerolysin (489 aa).

The first 24 residues, 1–24 (MMNRIITANLANLASSLMLAQVLG), serve as a signal peptide directing secretion. 2 cysteine pairs are disulfide-bonded: cysteine 44/cysteine 100 and cysteine 184/cysteine 189. Positions 70 to 86 (WQITGLADRWVIMGPGY) are interaction with host N-linked glycan. The part of the transmembrane beta-barrel after proteolytic activation of the toxin and insertion into the host membrane stretch occupies residues 257-289 (YSLSEKVTTKNKFQWPLVGETELAIEIAASQSW). Residues 347–356 (RWGGNAWYTH) are interaction with glycans from host GPI-anchor. Residues 445–489 (TRSAKAAQLRSASAEEVALTSVDLDSEALANEGFGNVSLTIVPVQ) constitute a propeptide that is removed on maturation.

It belongs to the aerolysin family. Homodimer in solution; homoheptamer in the host membrane. After binding to GPI-anchored proteins in target membranes and proteolytic removal of the C-terminal propeptide, the protein assembles into a heptameric pre-pore complex. A further conformation change leads to insertion into the host membrane. In terms of processing, proteolytic cleavage and subsequent release of the propeptide trigger a major conformation change, leading to the formation of a heptameric pre-pore that then inserts into the host membrane.

The protein localises to the secreted. Its subcellular location is the host cell membrane. In terms of biological role, secreted, cytolytic toxin that forms pores in host membranes after proteolytic removal of a C-terminal propeptide, leading to destruction of the membrane permeability barrier and cell death. The pores are formed by transmembrane beta-strands and are approximately 3 nm in diameter. In Aeromonas salmonicida, this protein is Aerolysin (ash3).